A 314-amino-acid polypeptide reads, in one-letter code: Ribonuclease Z (314 aa).

The Zn(2+) site is built by histidine 62, histidine 64, aspartate 66, histidine 67, histidine 139, aspartate 210, and histidine 268. The Proton acceptor role is filled by aspartate 66.

It belongs to the RNase Z family. In terms of assembly, homodimer. Zn(2+) serves as cofactor.

The enzyme catalyses Endonucleolytic cleavage of RNA, removing extra 3' nucleotides from tRNA precursor, generating 3' termini of tRNAs. A 3'-hydroxy group is left at the tRNA terminus and a 5'-phosphoryl group is left at the trailer molecule.. Functionally, zinc phosphodiesterase, which displays some tRNA 3'-processing endonuclease activity. Probably involved in tRNA maturation, by removing a 3'-trailer from precursor tRNA. The polypeptide is Ribonuclease Z (Rippkaea orientalis (strain PCC 8801 / RF-1) (Cyanothece sp. (strain PCC 8801))).